The chain runs to 261 residues: Type III pantothenate kinase (261 aa).

6–13 (DVGNTNTV) is an ATP binding site. 107–110 (GADR) contributes to the substrate binding site. Aspartate 109 serves as the catalytic Proton acceptor. Aspartate 129 provides a ligand contact to K(+). Threonine 132 lines the ATP pocket. Threonine 183 is a binding site for substrate.

Belongs to the type III pantothenate kinase family. In terms of assembly, homodimer. NH4(+) is required as a cofactor. Requires K(+) as cofactor.

Its subcellular location is the cytoplasm. It carries out the reaction (R)-pantothenate + ATP = (R)-4'-phosphopantothenate + ADP + H(+). Its pathway is cofactor biosynthesis; coenzyme A biosynthesis; CoA from (R)-pantothenate: step 1/5. Its function is as follows. Catalyzes the phosphorylation of pantothenate (Pan), the first step in CoA biosynthesis. This is Type III pantothenate kinase from Kosmotoga olearia (strain ATCC BAA-1733 / DSM 21960 / TBF 19.5.1).